Consider the following 318-residue polypeptide: D-alanine--D-alanine ligase (318 aa).

The 196-residue stretch at 116–311 (KQVWQSLGIP…FQQLVLAILA (196 aa)) folds into the ATP-grasp domain. Position 142–197 (142–197 (STELGFPLIVKPAHEGSSIGMAKVNSAQELVAAWQDAAKYDSQVLVEQWIHGPEFT)) interacts with ATP. The Mg(2+) site is built by Asp265, Glu278, and Asn280.

The protein belongs to the D-alanine--D-alanine ligase family. The cofactor is Mg(2+). Requires Mn(2+) as cofactor.

The protein resides in the cytoplasm. The catalysed reaction is 2 D-alanine + ATP = D-alanyl-D-alanine + ADP + phosphate + H(+). Its pathway is cell wall biogenesis; peptidoglycan biosynthesis. In terms of biological role, cell wall formation. In Pseudomonas putida (strain GB-1), this protein is D-alanine--D-alanine ligase.